We begin with the raw amino-acid sequence, 31 residues long: Photosystem II reaction center protein T (31 aa).

The chain crosses the membrane as a helical span at residues Ala-3–Phe-23.

It belongs to the PsbT family. As to quaternary structure, PSII is composed of 1 copy each of membrane proteins PsbA, PsbB, PsbC, PsbD, PsbE, PsbF, PsbH, PsbI, PsbJ, PsbK, PsbL, PsbM, PsbT, PsbY, PsbZ, Psb30/Ycf12, at least 3 peripheral proteins of the oxygen-evolving complex and a large number of cofactors. It forms dimeric complexes.

The protein resides in the plastid. It localises to the chloroplast thylakoid membrane. Found at the monomer-monomer interface of the photosystem II (PS II) dimer, plays a role in assembly and dimerization of PSII. PSII is a light-driven water plastoquinone oxidoreductase, using light energy to abstract electrons from H(2)O, generating a proton gradient subsequently used for ATP formation. The sequence is that of Photosystem II reaction center protein T from Chlamydomonas reinhardtii (Chlamydomonas smithii).